Here is a 501-residue protein sequence, read N- to C-terminus: Glycerol kinase (501 aa).

Thr12 contacts ADP. ATP is bound by residues Thr12, Thr13, and Ser14. Thr12 is a sn-glycerol 3-phosphate binding site. An ADP-binding site is contributed by Arg16. The sn-glycerol 3-phosphate site is built by Arg82, Glu83, Tyr135, and Asp244. Arg82, Glu83, Tyr135, Asp244, and Gln245 together coordinate glycerol. ADP contacts are provided by Thr266, Gly309, Gly409, and Asn413. 3 residues coordinate ATP: Thr266, Gly309, and Gly409.

The protein belongs to the FGGY kinase family.

The enzyme catalyses glycerol + ATP = sn-glycerol 3-phosphate + ADP + H(+). The protein operates within polyol metabolism; glycerol degradation via glycerol kinase pathway; sn-glycerol 3-phosphate from glycerol: step 1/1. Inhibited by fructose 1,6-bisphosphate (FBP). Functionally, key enzyme in the regulation of glycerol uptake and metabolism. Catalyzes the phosphorylation of glycerol to yield sn-glycerol 3-phosphate. This Coxiella burnetii (strain Dugway 5J108-111) protein is Glycerol kinase.